The sequence spans 111 residues: Distal membrane-arm assembly complex protein 1 (111 aa).

The span at 1–11 (MGSSFSGSTEF) shows a compositional bias: polar residues. The segment at 1-40 (MGSSFSGSTEFSAPAPPTVSTAVPANPPAKSAVPASPARD) is disordered. A compositionally biased stretch (low complexity) spans 18–38 (TVSTAVPANPPAKSAVPASPA). Helical transmembrane passes span 51–68 (VLSGSTLFGAGTYVYLVA) and 81–101 (GTVLQMVIGISIACWGVVVLV).

As to quaternary structure, interacts with incompletely assembled mitochondrial NADH:ubiquinone oxidoreductase complex (complex I).

It localises to the mitochondrion inner membrane. Its function is as follows. Required for the assembly of the mitochondrial NADH:ubiquinone oxidoreductase complex (complex I). Involved in the assembly of the distal region of complex I. This is Distal membrane-arm assembly complex protein 1 from Mus musculus (Mouse).